A 700-amino-acid chain; its full sequence is Elongation factor G (700 aa).

Residues 8–290 (ERYRNIGISA…GVIDFMPSPI (283 aa)) form the tr-type G domain. GTP contacts are provided by residues 17 to 24 (AHIDAGKT), 88 to 92 (DTPGH), and 142 to 145 (NKMD).

It belongs to the TRAFAC class translation factor GTPase superfamily. Classic translation factor GTPase family. EF-G/EF-2 subfamily.

The protein resides in the cytoplasm. In terms of biological role, catalyzes the GTP-dependent ribosomal translocation step during translation elongation. During this step, the ribosome changes from the pre-translocational (PRE) to the post-translocational (POST) state as the newly formed A-site-bound peptidyl-tRNA and P-site-bound deacylated tRNA move to the P and E sites, respectively. Catalyzes the coordinated movement of the two tRNA molecules, the mRNA and conformational changes in the ribosome. The chain is Elongation factor G from Methylibium petroleiphilum (strain ATCC BAA-1232 / LMG 22953 / PM1).